Consider the following 484-residue polypeptide: Hexokinase-2 (484 aa).

The 447-residue stretch at 21 to 467 (PQLLEALKPI…SGVGAAVIAA (447 aa)) folds into the Hexokinase domain. The segment at 75–208 (TGKETGSYLA…GVPIDVVALI (134 aa)) is hexokinase small subdomain. The tract at residues 209–456 (NDTTGTLVAS…DPIIIVPAED (248 aa)) is hexokinase large subdomain.

The protein belongs to the hexokinase family. Monomer.

It is found in the cytoplasm. The enzyme catalyses a D-hexose + ATP = a D-hexose 6-phosphate + ADP + H(+). The catalysed reaction is D-fructose + ATP = D-fructose 6-phosphate + ADP + H(+). It carries out the reaction D-glucose + ATP = D-glucose 6-phosphate + ADP + H(+). Its pathway is carbohydrate metabolism; hexose metabolism. It participates in carbohydrate degradation; glycolysis; D-glyceraldehyde 3-phosphate and glycerone phosphate from D-glucose: step 1/4. Functionally, catalyzes the phosphorylation of hexose, such as D-glucose and D-fructose, to hexose 6-phosphate (D-glucose 6-phosphate and D-fructose 6-phosphate, respectively). Mediates the initial step of glycolysis by catalyzing phosphorylation of D-glucose to D-glucose 6-phosphate. The polypeptide is Hexokinase-2 (HXK2) (Candida albicans (strain SC5314 / ATCC MYA-2876) (Yeast)).